Consider the following 224-residue polypeptide: Ornithine decarboxylase antizyme (224 aa).

The protein belongs to the ODC antizyme family. Interacts with ODC and thereby sterically blocks ODC homodimerization.

Its function is as follows. Ornithine decarboxylase (ODC) antizyme protein that negatively regulates ODC activity and intracellular polyamine biosynthesis in response to increased intracellular polyamine levels. Binds to ODC monomers, inhibiting the assembly of the functional ODC homodimer, and targets the monomers for ubiquitin-independent proteolytic destruction by the 26S proteasome. The sequence is that of Ornithine decarboxylase antizyme (spa1) from Schizosaccharomyces octosporus (Fission yeast).